Consider the following 276-residue polypeptide: N-alpha-acetyltransferase 60 (276 aa).

One can recognise an N-acetyltransferase domain in the interval 34–239 (VQLRFLVPDD…WTLLDHIKHY (206 aa)). Tyr-59 serves as a coordination point for substrate. The active site involves Tyr-139. Leu-141 provides a ligand contact to substrate. Residues 143 to 145 (LGV) and 151 to 156 (RNGIGS) each bind acetyl-CoA. His-180 is a catalytic residue. Residues Asn-185 and 192–195 (YEKR) contribute to the acetyl-CoA site. The segment at 204-215 (PYYYNIRGKGKD) is required for homodimerization. Residue Tyr-207 participates in substrate binding.

The protein belongs to the acetyltransferase family. NAA60 subfamily.

The catalysed reaction is N-terminal L-methionyl-[transmembrane protein] + acetyl-CoA = N-terminal N(alpha)-acetyl-L-methionyl-[transmembrane protein] + CoA + H(+). The enzyme catalyses L-lysyl-[protein] + acetyl-CoA = N(6)-acetyl-L-lysyl-[protein] + CoA + H(+). Its function is as follows. Displays alpha (N-terminal) acetyltransferase activity towards a range of N-terminal sequences including those starting with Met-Lys, Met-Val, Met-Ala and Met-Met. Required for normal chromosomal segregation during anaphase. In terms of biological role, shows histone acetyltransferase activity toward free histones. Does not show histone acetyltransferase activity toward free histones. This is N-alpha-acetyltransferase 60 from Drosophila melanogaster (Fruit fly).